Reading from the N-terminus, the 499-residue chain is Cobyric acid synthase (499 aa).

One can recognise a GATase cobBQ-type domain in the interval 251-442; that stretch reads SLDIAVVSLK…LHGVFDNLEW (192 aa). The active-site Nucleophile is the cysteine 332. The active site involves histidine 434.

This sequence belongs to the CobB/CobQ family. CobQ subfamily.

The protein operates within cofactor biosynthesis; adenosylcobalamin biosynthesis. Catalyzes amidations at positions B, D, E, and G on adenosylcobyrinic A,C-diamide. NH(2) groups are provided by glutamine, and one molecule of ATP is hydrogenolyzed for each amidation. The sequence is that of Cobyric acid synthase from Streptococcus sanguinis (strain SK36).